A 272-amino-acid chain; its full sequence is Ethanolamine ammonia-lyase small subunit (272 aa).

V161, E182, and C211 together coordinate adenosylcob(III)alamin.

This sequence belongs to the EutC family. As to quaternary structure, the basic unit is a heterodimer which dimerizes to form tetramers. The heterotetramers trimerize; 6 large subunits form a core ring with 6 small subunits projecting outwards. It depends on adenosylcob(III)alamin as a cofactor.

It is found in the bacterial microcompartment. It catalyses the reaction ethanolamine = acetaldehyde + NH4(+). It participates in amine and polyamine degradation; ethanolamine degradation. Functionally, catalyzes the deamination of various vicinal amino-alcohols to oxo compounds. Allows this organism to utilize ethanolamine as the sole source of nitrogen and carbon in the presence of external vitamin B12. In Pseudomonas putida (strain ATCC 47054 / DSM 6125 / CFBP 8728 / NCIMB 11950 / KT2440), this protein is Ethanolamine ammonia-lyase small subunit.